Consider the following 427-residue polypeptide: Trigger factor (427 aa).

In terms of domain architecture, PPIase FKBP-type spans 163–248; that stretch reads GDTAVIDFEG…VHEIKAKELP (86 aa).

This sequence belongs to the FKBP-type PPIase family. Tig subfamily.

It is found in the cytoplasm. The catalysed reaction is [protein]-peptidylproline (omega=180) = [protein]-peptidylproline (omega=0). Its function is as follows. Involved in protein export. Acts as a chaperone by maintaining the newly synthesized protein in an open conformation. Functions as a peptidyl-prolyl cis-trans isomerase. The protein is Trigger factor of Bacillus cytotoxicus (strain DSM 22905 / CIP 110041 / 391-98 / NVH 391-98).